We begin with the raw amino-acid sequence, 397 residues long: N-acetyllactosaminide beta-1,3-N-acetylglucosaminyltransferase 2 (397 aa).

Residues 1-7 lie on the Cytoplasmic side of the membrane; that stretch reads MSVGRRR. A helical; Signal-anchor for type II membrane protein transmembrane segment spans residues 8-28; the sequence is VKLLGILMMANVFIYLIVEVS. Residues 29-325 lie on the Lumenal side of the membrane; it reads KNSSQDKNGK…ALRLYSATSR (297 aa). 6 N-linked (GlcNAc...) asparagine glycosylation sites follow: asparagine 30, asparagine 79, asparagine 89, asparagine 127, asparagine 173, and asparagine 219.

Belongs to the glycosyltransferase 31 family. As to quaternary structure, interacts with B3GNT8; this interaction greatly increases B3GNT2 catalytic activity, independently of B3GNT8 enzymatic activity. Requires Mn(2+) as cofactor. In terms of tissue distribution, expressed in heart, brain, lung, kidney and testis and, to a lesser extent, in liver and skeletal muscle. No expression in spleen.

Its subcellular location is the golgi apparatus membrane. The catalysed reaction is a beta-D-galactosyl-(1-&gt;4)-N-acetyl-beta-D-glucosaminyl derivative + UDP-N-acetyl-alpha-D-glucosamine = an N-acetyl-beta-D-glucosaminyl-(1-&gt;3)-beta-D-galactosyl-(1-&gt;4)-N-acetyl-beta-D-glucosaminyl derivative + UDP + H(+). Its pathway is protein modification; protein glycosylation. Beta-1,3-N-acetylglucosaminyltransferase involved in the synthesis of poly-N-acetyllactosamine. Catalyzes the initiation and elongation of poly-N-acetyllactosamine chains. Probably constitutes the main polylactosamine synthase. In Mus musculus (Mouse), this protein is N-acetyllactosaminide beta-1,3-N-acetylglucosaminyltransferase 2 (B3GNT2).